The following is a 96-amino-acid chain: Small ribosomal subunit protein bS6 (96 aa).

This sequence belongs to the bacterial ribosomal protein bS6 family.

In terms of biological role, binds together with bS18 to 16S ribosomal RNA. The protein is Small ribosomal subunit protein bS6 of Streptococcus uberis (strain ATCC BAA-854 / 0140J).